Here is a 487-residue protein sequence, read N- to C-terminus: Glutamyl-tRNA(Gln) amidotransferase subunit A (487 aa).

Catalysis depends on charge relay system residues Lys77 and Ser152. Ser176 acts as the Acyl-ester intermediate in catalysis.

It belongs to the amidase family. GatA subfamily. As to quaternary structure, heterotrimer of A, B and C subunits.

The catalysed reaction is L-glutamyl-tRNA(Gln) + L-glutamine + ATP + H2O = L-glutaminyl-tRNA(Gln) + L-glutamate + ADP + phosphate + H(+). In terms of biological role, allows the formation of correctly charged Gln-tRNA(Gln) through the transamidation of misacylated Glu-tRNA(Gln) in organisms which lack glutaminyl-tRNA synthetase. The reaction takes place in the presence of glutamine and ATP through an activated gamma-phospho-Glu-tRNA(Gln). This Ligilactobacillus salivarius (strain UCC118) (Lactobacillus salivarius) protein is Glutamyl-tRNA(Gln) amidotransferase subunit A.